We begin with the raw amino-acid sequence, 300 residues long: Protein orai (300 aa).

At 1–128 (MPRSHDPSRV…SKAQLKASSR (128 aa)) the chain is on the cytoplasmic side. Residues 58 to 82 (QPPSSGGGSRNVGGGDGAAGNSKNG) form a disordered region. Positions 62–75 (SGGGSRNVGGGDGA) are enriched in gly residues. A helical membrane pass occupies residues 129 to 146 (TSALLAGFAMVCLVELQY). Over 147–153 (DDSTSKP) the chain is Extracellular. A helical membrane pass occupies residues 154–174 (LLIVLGVVTSLLVSVHLLALM). The Cytoplasmic portion of the chain corresponds to 175-205 (MSTCILPYMEATGCTQDSPHLKLKFYIDLSW). A helical membrane pass occupies residues 206–226 (LFSTCIGLLLFLVEIGVIFYV). At 227–237 (KFTAVGYPTAG) the chain is on the extracellular side. A helical membrane pass occupies residues 238–258 (YITTAMLIPVGIVFVLFSYLI). Topologically, residues 259-300 (HKNRVSHSLGRFKDKVDTMKQFLDVEANLQKSTIAPSTIRDI) are cytoplasmic.

Belongs to the Orai family.

Its subcellular location is the membrane. Functionally, ca(2+) release-activated Ca(2+)-like (CRAC-like) channel subunit which mediates Ca(2+) influx and increase in Ca(2+)-selective current by synergy with the Ca(2+) sensor, stim-1. Required for Ca(2+) and IP3-dependent contractile activity of sheath cells and the spermatheca. Affects brood size and somatic cell function. This Caenorhabditis briggsae protein is Protein orai (orai-1).